The primary structure comprises 299 residues: Pyridoxal 5'-phosphate synthase subunit PdxS (299 aa).

D24 is a D-ribose 5-phosphate binding site. The active-site Schiff-base intermediate with D-ribose 5-phosphate is the K81. G153 lines the D-ribose 5-phosphate pocket. R165 contacts D-glyceraldehyde 3-phosphate. Residues G219 and 240–241 (GS) contribute to the D-ribose 5-phosphate site.

Belongs to the PdxS/SNZ family. In the presence of PdxT, forms a dodecamer of heterodimers.

It catalyses the reaction aldehydo-D-ribose 5-phosphate + D-glyceraldehyde 3-phosphate + L-glutamine = pyridoxal 5'-phosphate + L-glutamate + phosphate + 3 H2O + H(+). It participates in cofactor biosynthesis; pyridoxal 5'-phosphate biosynthesis. Its function is as follows. Catalyzes the formation of pyridoxal 5'-phosphate from ribose 5-phosphate (RBP), glyceraldehyde 3-phosphate (G3P) and ammonia. The ammonia is provided by the PdxT subunit. Can also use ribulose 5-phosphate and dihydroxyacetone phosphate as substrates, resulting from enzyme-catalyzed isomerization of RBP and G3P, respectively. The sequence is that of Pyridoxal 5'-phosphate synthase subunit PdxS from Methanococcus maripaludis (strain DSM 14266 / JCM 13030 / NBRC 101832 / S2 / LL).